The chain runs to 206 residues: Transcriptional regulator GfcR (206 aa).

This sequence belongs to the purine/pyrimidine phosphoribosyltransferase family. GfcR subfamily.

This Methanosphaerula palustris (strain ATCC BAA-1556 / DSM 19958 / E1-9c) protein is Transcriptional regulator GfcR.